A 514-amino-acid chain; its full sequence is Histidine ammonia-lyase (514 aa).

The 5-imidazolinone (Ala-Gly) cross-link spans 146-148 (ASG). At Ser147 the chain carries 2,3-didehydroalanine (Ser).

The protein belongs to the PAL/histidase family. Contains an active site 4-methylidene-imidazol-5-one (MIO), which is formed autocatalytically by cyclization and dehydration of residues Ala-Ser-Gly.

It is found in the cytoplasm. The enzyme catalyses L-histidine = trans-urocanate + NH4(+). It functions in the pathway amino-acid degradation; L-histidine degradation into L-glutamate; N-formimidoyl-L-glutamate from L-histidine: step 1/3. In Clostridium tetani (strain Massachusetts / E88), this protein is Histidine ammonia-lyase.